The chain runs to 181 residues: ATP-dependent protease subunit ClpQ (181 aa).

S2 is an active-site residue. Na(+) is bound by residues G165, C168, and T171.

The protein belongs to the peptidase T1B family. HslV subfamily. A double ring-shaped homohexamer of ClpQ is capped on each side by a ring-shaped ClpY homohexamer. The assembly of the ClpQ/ClpY complex is dependent on binding of ATP.

It is found in the cytoplasm. In terms of biological role, protease subunit of a proteasome-like degradation complex. This chain is ATP-dependent protease subunit ClpQ (clpQ), found in Bacillus velezensis (strain DSM 23117 / BGSC 10A6 / LMG 26770 / FZB42) (Bacillus amyloliquefaciens subsp. plantarum).